The following is a 159-amino-acid chain: ATP synthase subunit b 2 (159 aa).

The chain crosses the membrane as a helical span at residues 1–21 (MDATFWAFIALVIFVAIVVYM).

Belongs to the ATPase B chain family. In terms of assembly, F-type ATPases have 2 components, F(1) - the catalytic core - and F(0) - the membrane proton channel. F(1) has five subunits: alpha(3), beta(3), gamma(1), delta(1), epsilon(1). F(0) has three main subunits: a(1), b(2) and c(10-14). The alpha and beta chains form an alternating ring which encloses part of the gamma chain. F(1) is attached to F(0) by a central stalk formed by the gamma and epsilon chains, while a peripheral stalk is formed by the delta and b chains.

It localises to the cell inner membrane. F(1)F(0) ATP synthase produces ATP from ADP in the presence of a proton or sodium gradient. F-type ATPases consist of two structural domains, F(1) containing the extramembraneous catalytic core and F(0) containing the membrane proton channel, linked together by a central stalk and a peripheral stalk. During catalysis, ATP synthesis in the catalytic domain of F(1) is coupled via a rotary mechanism of the central stalk subunits to proton translocation. In terms of biological role, component of the F(0) channel, it forms part of the peripheral stalk, linking F(1) to F(0). This Brucella suis (strain ATCC 23445 / NCTC 10510) protein is ATP synthase subunit b 2.